A 345-amino-acid chain; its full sequence is MLFRSWLPSSMRHRTLSSSPALWASIPCPRSELRLDLVLASGQSFRWKEQSPAHWSGVLADQVWTLTQTEDQLYCTVYRGDDSQVSRPTLEELETLHKYFQLDVSLAQLYSHWASVDSHFQRVAQKFQGVRLLRQDPTECLFSFICSSNNNIARITGMVERLCQAFGPRLIQLDDVTYHGFPNLHALAGPEAETHLRKLGLGYRARYVRASAKAILEEQGGPAWLQQLRVAPYEEAHKALCTLPGVGAKVADCICLMALDKPQAVPVDVHVWQIAHRDYGWHPKTSQAKGPSPLANKELGNFFRNLWGPYAGWAQAVLFSADLRQPSLSREPPAKRKKGSKRPEG.

DNA contacts are provided by N149, R154, and R204. The Schiff-base intermediate with DNA role is filled by K249. 2 residues coordinate 8-oxoguanine: P266 and D268. 2 residues coordinate DNA: H270 and Q287. The 8-oxoguanine site is built by Q315 and F319.

The protein belongs to the type-1 OGG1 family. As to expression, highest expression in testis.

Its subcellular location is the nucleus. It localises to the nucleoplasm. It is found in the nucleus speckle. The protein resides in the nucleus matrix. It carries out the reaction 2'-deoxyribonucleotide-(2'-deoxyribose 5'-phosphate)-2'-deoxyribonucleotide-DNA = a 3'-end 2'-deoxyribonucleotide-(2,3-dehydro-2,3-deoxyribose 5'-phosphate)-DNA + a 5'-end 5'-phospho-2'-deoxyribonucleoside-DNA + H(+). DNA repair enzyme that incises DNA at 8-oxoG residues. Excises 7,8-dihydro-8-oxoguanine and 2,6-diamino-4-hydroxy-5-N-methylformamidopyrimidine (FAPY) from damaged DNA. Has a beta-lyase activity that nicks DNA 3' to the lesion. In Mus musculus (Mouse), this protein is N-glycosylase/DNA lyase (Ogg1).